A 180-amino-acid chain; its full sequence is Bifunctional bis(5'-adenosyl)-triphosphatase/adenylylsulfatase FHIT (180 aa).

The 108-residue stretch at 27-134 (SYAFGPYKID…LPRKGGDFEK (108 aa)) folds into the HIT domain. Substrate is bound by residues Asn52 and Gln108. The Histidine triad motif motif lies at 119–123 (HVHIH). Catalysis depends on His121, which acts as the Tele-AMP-histidine intermediate. His123 is a substrate binding site.

It catalyses the reaction P(1),P(3)-bis(5'-adenosyl) triphosphate + H2O = AMP + ADP + 2 H(+). The enzyme catalyses adenosine 5'-phosphosulfate + H2O = sulfate + AMP + 2 H(+). The catalysed reaction is adenosine 5'-phosphosulfate + NH4(+) = adenosine 5'-phosphoramidate + sulfate + 2 H(+). It carries out the reaction adenosine 5'-phosphoramidate + H2O = AMP + NH4(+). Possesses dinucleoside triphosphate hydrolase activity. Cleaves P(1)-P(3)-bis(5'-adenosyl) triphosphate (Ap3A) to yield AMP and ADP. Exhibits adenylylsulfatase activity, hydrolyzing adenosine 5'-phosphosulfate to yield AMP and sulfate. Exhibits adenosine 5'-monophosphoramidase activity, hydrolyzing purine nucleotide phosphoramidates with a single phosphate group such as adenosine 5'monophosphoramidate (AMP-NH2) to yield AMP and NH2. Exhibits adenylylsulfate-ammonia adenylyltransferase, catalyzing the ammonolysis of adenosine 5'-phosphosulfate resulting in the formation of adenosine 5'-phosphoramidate. In Arabidopsis thaliana (Mouse-ear cress), this protein is Bifunctional bis(5'-adenosyl)-triphosphatase/adenylylsulfatase FHIT.